Consider the following 146-residue polypeptide: Acireductone dioxygenase (146 aa).

4 residues coordinate Fe(2+): histidine 71, histidine 73, glutamate 77, and histidine 116. Positions 71, 73, 77, and 116 each coordinate Ni(2+).

It belongs to the acireductone dioxygenase (ARD) family. Fe(2+) is required as a cofactor. It depends on Ni(2+) as a cofactor.

It is found in the cytoplasm. The protein localises to the nucleus. It carries out the reaction 1,2-dihydroxy-5-(methylsulfanyl)pent-1-en-3-one + O2 = 4-methylsulfanyl-2-oxobutanoate + formate + 2 H(+). The enzyme catalyses 1,2-dihydroxy-5-(methylsulfanyl)pent-1-en-3-one + O2 = 3-(methylsulfanyl)propanoate + CO + formate + 2 H(+). The protein operates within amino-acid biosynthesis; L-methionine biosynthesis via salvage pathway; L-methionine from S-methyl-5-thio-alpha-D-ribose 1-phosphate: step 5/6. In terms of biological role, catalyzes 2 different reactions between oxygen and the acireductone 1,2-dihydroxy-3-keto-5-methylthiopentene (DHK-MTPene) depending upon the metal bound in the active site. Fe-containing acireductone dioxygenase (Fe-ARD) produces formate and 2-keto-4-methylthiobutyrate (KMTB), the alpha-ketoacid precursor of methionine in the methionine recycle pathway. Ni-containing acireductone dioxygenase (Ni-ARD) produces methylthiopropionate, carbon monoxide and formate, and does not lie on the methionine recycle pathway. The polypeptide is Acireductone dioxygenase (Heterostelium pallidum (strain ATCC 26659 / Pp 5 / PN500) (Cellular slime mold)).